Consider the following 289-residue polypeptide: Probable branched-chain-amino-acid aminotransferase (289 aa).

Lys-154 carries the post-translational modification N6-(pyridoxal phosphate)lysine.

The protein belongs to the class-IV pyridoxal-phosphate-dependent aminotransferase family. It depends on pyridoxal 5'-phosphate as a cofactor.

The catalysed reaction is L-leucine + 2-oxoglutarate = 4-methyl-2-oxopentanoate + L-glutamate. It catalyses the reaction L-isoleucine + 2-oxoglutarate = (S)-3-methyl-2-oxopentanoate + L-glutamate. It carries out the reaction L-valine + 2-oxoglutarate = 3-methyl-2-oxobutanoate + L-glutamate. The protein operates within amino-acid biosynthesis; L-isoleucine biosynthesis; L-isoleucine from 2-oxobutanoate: step 4/4. Its pathway is amino-acid biosynthesis; L-leucine biosynthesis; L-leucine from 3-methyl-2-oxobutanoate: step 4/4. It participates in amino-acid biosynthesis; L-valine biosynthesis; L-valine from pyruvate: step 4/4. Its function is as follows. Acts on leucine, isoleucine and valine. The protein is Probable branched-chain-amino-acid aminotransferase (ilvE) of Rickettsia bellii (strain RML369-C).